The primary structure comprises 366 residues: MQNLLPTESYEQQLTEKVSRLKNMMAPFQPPRPEVFRSPLSHYRMRAEFRIWHEQDDLYHIMFDQQTKQRIRLVQFPVASKLINKMMVVLIDSIRSEQILCHKLFQIDYLSTCSNKILVSLLYHKKLGEEWTQQALRLREALRHKGFDVELIGRAAKTKITLDHDYIDEVLPVAGRKMIYRQVENSFTQPNASVNIHMLEWAINITKDSKGDLLELYCGNGNFSLALAQNFERVLATEIAKPSVAAAQYNITANGIDNVQIIRMSAEEFTQAMNGEREFNRLQGINLKSYQCETIFVDPPRSGLDEKTLEMVRAYPRILYISCNPETLCHNLETLTQTHKISHLALFDQFPYTHHMECGVLLEKLN.

The S-adenosyl-L-methionine site is built by Gln-189, Tyr-217, Asn-222, Glu-238, and Asp-298. Cys-323 (nucleophile) is an active-site residue. Catalysis depends on Glu-357, which acts as the Proton acceptor.

The protein belongs to the class I-like SAM-binding methyltransferase superfamily. RNA M5U methyltransferase family. TrmA subfamily.

The catalysed reaction is uridine(54) in tRNA + S-adenosyl-L-methionine = 5-methyluridine(54) in tRNA + S-adenosyl-L-homocysteine + H(+). It catalyses the reaction uridine(341) in tmRNA + S-adenosyl-L-methionine = 5-methyluridine(341) in tmRNA + S-adenosyl-L-homocysteine + H(+). Functionally, dual-specificity methyltransferase that catalyzes the formation of 5-methyluridine at position 54 (m5U54) in all tRNAs, and that of position 341 (m5U341) in tmRNA (transfer-mRNA). In Photorhabdus laumondii subsp. laumondii (strain DSM 15139 / CIP 105565 / TT01) (Photorhabdus luminescens subsp. laumondii), this protein is tRNA/tmRNA (uracil-C(5))-methyltransferase.